An 85-amino-acid polypeptide reads, in one-letter code: Granaticin polyketide synthase acyl carrier protein (85 aa).

One can recognise a Carrier domain in the interval 3-81; it reads RLTLDGLRTI…VLLDLVNGAQ (79 aa). The residue at position 41 (serine 41) is an O-(pantetheine 4'-phosphoryl)serine.

In terms of processing, 4'-phosphopantetheine is transferred from CoA to a specific serine of the apo-ACP-like protein.

Its pathway is antibiotic biosynthesis; granaticin biosynthesis. Acyl carrier protein. The chain is Granaticin polyketide synthase acyl carrier protein from Streptomyces violaceoruber.